The chain runs to 471 residues: Cytidine and dCMP deaminase domain-containing protein 1 (471 aa).

Residues 1 to 27 (MAESNSWRSHRESDGNRSIPNGDDARN) form a disordered region. 2 consecutive CMP/dCMP-type deaminase domains span residues 57–153 (LWME…LLSE) and 312–460 (GVIR…KLNG). Zn(2+) is bound by residues His-99, Cys-124, Cys-127, and His-393. Glu-395 acts as the Proton donor in catalysis. Zn(2+) is bound by residues Cys-421 and Cys-424.

Belongs to the cytidine and deoxycytidylate deaminase family. Requires Zn(2+) as cofactor.

It carries out the reaction 2'-deoxycytidine + H2O + H(+) = 2'-deoxyuridine + NH4(+). The enzyme catalyses cytidine + H2O + H(+) = uridine + NH4(+). Functionally, catalyzes the deamination of cytidine and deoxycytidine into uridine and deoxyuridine, respectively. The sequence is that of Cytidine and dCMP deaminase domain-containing protein 1 (cdadc1) from Danio rerio (Zebrafish).